An 800-amino-acid chain; its full sequence is DNA topoisomerase 4 subunit A (800 aa).

Positions 31–495 (LPDVRDGLKP…EIEEIKIDKE (465 aa)) constitute a Topo IIA-type catalytic domain. Tyr-119 (O-(5'-phospho-DNA)-tyrosine intermediate) is an active-site residue.

The protein belongs to the type II topoisomerase GyrA/ParC subunit family. ParC type 2 subfamily. In terms of assembly, heterotetramer composed of ParC and ParE.

Its subcellular location is the cell membrane. It carries out the reaction ATP-dependent breakage, passage and rejoining of double-stranded DNA.. In terms of biological role, topoisomerase IV is essential for chromosome segregation. It relaxes supercoiled DNA. Performs the decatenation events required during the replication of a circular DNA molecule. This Staphylococcus aureus (strain N315) protein is DNA topoisomerase 4 subunit A.